Reading from the N-terminus, the 132-residue chain is Fatty acid-binding protein, brain (132 aa).

Position 2 is an N-acetylvaline (Val2). A fatty acid is bound at residue 127–129 (RCY).

This sequence belongs to the calycin superfamily. Fatty-acid binding protein (FABP) family. In terms of tissue distribution, expressed in brain and other neural tissues.

Its subcellular location is the cytoplasm. In terms of biological role, B-FABP could be involved in the transport of a so far unknown hydrophobic ligand with potential morphogenic activity during CNS development. It is required for the establishment of the radial glial fiber system in developing brain, a system that is necessary for the migration of immature neurons to establish cortical layers. In Mus musculus (Mouse), this protein is Fatty acid-binding protein, brain (Fabp7).